A 370-amino-acid chain; its full sequence is 3-dehydroquinate synthase (370 aa).

NAD(+) is bound by residues G112–D116, T136–S137, K149, K158, and T176–T179. Positions 191, 254, and 276 each coordinate Zn(2+).

It belongs to the sugar phosphate cyclases superfamily. Dehydroquinate synthase family. It depends on Co(2+) as a cofactor. Requires Zn(2+) as cofactor. The cofactor is NAD(+).

Its subcellular location is the cytoplasm. The catalysed reaction is 7-phospho-2-dehydro-3-deoxy-D-arabino-heptonate = 3-dehydroquinate + phosphate. The protein operates within metabolic intermediate biosynthesis; chorismate biosynthesis; chorismate from D-erythrose 4-phosphate and phosphoenolpyruvate: step 2/7. In terms of biological role, catalyzes the conversion of 3-deoxy-D-arabino-heptulosonate 7-phosphate (DAHP) to dehydroquinate (DHQ). The polypeptide is 3-dehydroquinate synthase (Xanthomonas oryzae pv. oryzae (strain MAFF 311018)).